The primary structure comprises 326 residues: MAFTPFPPRQPTASARLPLTLMTLDDWALATITGADSEKYMQGQVTADVSQMTENQHLLAAHCDAKGKMWSNLRLFRDGDGFAWIERRSVREPQLTELKKYAVFSKVTIAPDDERVLLGVAGFQARAALANLFSELPSKEKQVVKEGATTLLWFEHPAERFLIVTDEATANMLTDKLRGEAELNNSQQWLALNIEAGFPVIDAANSGQFIPQATNLQALGGISFKKGCYTGQEMVARAKFRGANKRALWLLAGSASRLPEAGEDLELKMGENWRRTGTVLAAVKLEDGQVVVQVVMNNDMEPDSIFRVRDDANTLHIEPLPYSLEE.

Residues tryptophan 27 and tryptophan 189 each contribute to the folate site.

It belongs to the tRNA-modifying YgfZ family.

The protein resides in the cytoplasm. Functionally, folate-binding protein involved in regulating the level of ATP-DnaA and in the modification of some tRNAs. It is probably a key factor in regulatory networks that act via tRNA modification, such as initiation of chromosomal replication. This Escherichia coli (strain SE11) protein is tRNA-modifying protein YgfZ.